The primary structure comprises 118 residues: Small ribosomal subunit protein uS13 (118 aa).

The segment at 92 to 118 (RKGLPVRGQRTKTNARTRKGPRKPIRK) is disordered.

It belongs to the universal ribosomal protein uS13 family. Part of the 30S ribosomal subunit. Forms a loose heterodimer with protein S19. Forms two bridges to the 50S subunit in the 70S ribosome.

Functionally, located at the top of the head of the 30S subunit, it contacts several helices of the 16S rRNA. In the 70S ribosome it contacts the 23S rRNA (bridge B1a) and protein L5 of the 50S subunit (bridge B1b), connecting the 2 subunits; these bridges are implicated in subunit movement. Contacts the tRNAs in the A and P-sites. The polypeptide is Small ribosomal subunit protein uS13 (Pseudomonas putida (strain ATCC 700007 / DSM 6899 / JCM 31910 / BCRC 17059 / LMG 24140 / F1)).